The chain runs to 176 residues: MMGGEAPELSAQERAGKAFPVSWDQFHRDCRALTWRLNEVGPFHAVIAITRGGLVPAAIVARELGVRVIDTVCIASYDHNKQGELQVLKGISEAAMKLGGGTGKGLLIVDDLVDTGKTGKLVREMLPDAHFATVYAKPKGRPLVDTYITEVSQDTWIFFPWDTALSYHPPLRDGAA.

Residues 51-52 (RG) and 110-118 (DDLVDTGKT) contribute to the 5-phospho-alpha-D-ribose 1-diphosphate site. Mg(2+) is bound at residue Asp111. Guanine contacts are provided by Asp114 and Ile157. Residues Asp114 and Ile157 each coordinate xanthine. Residues 114-118 (DTGKT) and 156-157 (WI) each bind GMP.

The protein belongs to the purine/pyrimidine phosphoribosyltransferase family. XGPT subfamily. Homotetramer. It depends on Mg(2+) as a cofactor.

It is found in the cell inner membrane. It carries out the reaction GMP + diphosphate = guanine + 5-phospho-alpha-D-ribose 1-diphosphate. It catalyses the reaction XMP + diphosphate = xanthine + 5-phospho-alpha-D-ribose 1-diphosphate. The catalysed reaction is IMP + diphosphate = hypoxanthine + 5-phospho-alpha-D-ribose 1-diphosphate. It functions in the pathway purine metabolism; GMP biosynthesis via salvage pathway; GMP from guanine: step 1/1. It participates in purine metabolism; XMP biosynthesis via salvage pathway; XMP from xanthine: step 1/1. Its function is as follows. Purine salvage pathway enzyme that catalyzes the transfer of the ribosyl-5-phosphate group from 5-phospho-alpha-D-ribose 1-diphosphate (PRPP) to the N9 position of the 6-oxopurines guanine and xanthine to form the corresponding ribonucleotides GMP (guanosine 5'-monophosphate) and XMP (xanthosine 5'-monophosphate), with the release of PPi. To a lesser extent, also acts on hypoxanthine. The chain is Xanthine-guanine phosphoribosyltransferase from Bradyrhizobium diazoefficiens (strain JCM 10833 / BCRC 13528 / IAM 13628 / NBRC 14792 / USDA 110).